Consider the following 328-residue polypeptide: DNA-directed RNA polymerase subunit alpha (328 aa).

Residues 1 to 231 (MIYQMQMPEK…EHVSLFANFS (231 aa)) form an alpha N-terminal domain (alpha-NTD) region. Residues 252-328 (MRKMLLTRIE…MDITKYQMKG (77 aa)) are alpha C-terminal domain (alpha-CTD).

This sequence belongs to the RNA polymerase alpha chain family. As to quaternary structure, homodimer. The RNAP catalytic core consists of 2 alpha, 1 beta, 1 beta' and 1 omega subunit. When a sigma factor is associated with the core the holoenzyme is formed, which can initiate transcription.

The catalysed reaction is RNA(n) + a ribonucleoside 5'-triphosphate = RNA(n+1) + diphosphate. Its function is as follows. DNA-dependent RNA polymerase catalyzes the transcription of DNA into RNA using the four ribonucleoside triphosphates as substrates. In Chlorobium phaeobacteroides (strain BS1), this protein is DNA-directed RNA polymerase subunit alpha.